The following is a 218-amino-acid chain: Phosphoribosylformylglycinamidine synthase subunit PurQ (218 aa).

A Glutamine amidotransferase type-1 domain is found at 2–218; the sequence is RVGVIRFPGS…FFRGILKFRG (217 aa). The active-site Nucleophile is the C85. Residues H192 and E194 contribute to the active site.

Part of the FGAM synthase complex composed of 1 PurL, 1 PurQ and 2 PurS subunits.

It is found in the cytoplasm. The enzyme catalyses N(2)-formyl-N(1)-(5-phospho-beta-D-ribosyl)glycinamide + L-glutamine + ATP + H2O = 2-formamido-N(1)-(5-O-phospho-beta-D-ribosyl)acetamidine + L-glutamate + ADP + phosphate + H(+). It carries out the reaction L-glutamine + H2O = L-glutamate + NH4(+). It participates in purine metabolism; IMP biosynthesis via de novo pathway; 5-amino-1-(5-phospho-D-ribosyl)imidazole from N(2)-formyl-N(1)-(5-phospho-D-ribosyl)glycinamide: step 1/2. Functionally, part of the phosphoribosylformylglycinamidine synthase complex involved in the purines biosynthetic pathway. Catalyzes the ATP-dependent conversion of formylglycinamide ribonucleotide (FGAR) and glutamine to yield formylglycinamidine ribonucleotide (FGAM) and glutamate. The FGAM synthase complex is composed of three subunits. PurQ produces an ammonia molecule by converting glutamine to glutamate. PurL transfers the ammonia molecule to FGAR to form FGAM in an ATP-dependent manner. PurS interacts with PurQ and PurL and is thought to assist in the transfer of the ammonia molecule from PurQ to PurL. The sequence is that of Phosphoribosylformylglycinamidine synthase subunit PurQ from Methanothermobacter thermautotrophicus (strain ATCC 29096 / DSM 1053 / JCM 10044 / NBRC 100330 / Delta H) (Methanobacterium thermoautotrophicum).